The sequence spans 342 residues: Polygalacturonase inhibitor 1 (342 aa).

A signal peptide spans 1-29; it reads MTQFNIPVTMSSSLSIILVILVSLRTALS. Intrachain disulfides connect cysteine 32/cysteine 62 and cysteine 63/cysteine 72. N-linked (GlcNAc...) asparagine glycosylation is present at asparagine 64. LRR repeat units lie at residues 82–107, 108–132, 133–156, 157–180, 181–205, 206–228, 229–252, 253–275, 276–299, and 300–319; these read NNLDLSGHNLPKPYPIPSSLANLPYL, NFLYIGGINNLVGPIPPAIAKLTQL, HYLYITHTNVSGAIPDFLSQIKTL, VTLDFSYNALSGTLPPSISSLPNL, GGITFDGNRISGAIPDSYGSFSKLF, TAMTISRNRLTGKIPPTFANLNL, AFVDLSRNMLEGDASVLFGSDKNT, KKIHLAKNSLAFDLGKVGLSKNL, NGLDLRNNRIYGTLPQGLTQLKFL, and QSLNVSFNNLCGEIPQGGNL. Asparagine 141 is a glycosylation site (N-linked (GlcNAc...) asparagine). Asparagine 303 carries an N-linked (GlcNAc...) asparagine glycan. 2 cysteine pairs are disulfide-bonded: cysteine 310-cysteine 332 and cysteine 334-cysteine 341.

This sequence belongs to the polygalacturonase-inhibiting protein family.

The protein localises to the secreted. Its subcellular location is the cell wall. It is found in the membrane. In terms of biological role, inhibitor of fungal polygalacturonase. It is an important factor for plant resistance to phytopathogenic fungi. Substrate preference is polygalacturonase (PG) from A.niger &gt;&gt; PG of F.oxysporum, A.solani or B.cinerea. Not active on PG from F.moniliforme. The chain is Polygalacturonase inhibitor 1 (PGIP1) from Phaseolus vulgaris (Kidney bean).